We begin with the raw amino-acid sequence, 530 residues long: MQAQTQVKGLKELGLEPSEIFHNLSYDEIYEHEKKNGETVVSSNGTMMVDTGIFTGRSPKDKYFVDEPSSNGNIWWSHINFKVSEAIFDELYKKCVNYLSHKKLYVFDGYAGANPETRVSLRVVSEKAWQHHFCTNMFLRPTKEELVGLDPEFTIINACGIKNENFKQHGMNSEVFVIFHLAKKICIIGGTEYGGEMKKGIFSVMNYKLPLQGILSMHCSANVGQDGDTALFFGLSGTGKTTLSTDPNRKLIGDDEHGWDDNGIFNIEGGCYAKVINLDPKTEPDIYEAIRKDALLENVVYDPQTKIVDYSSAAKTENTRVSYPIFHINNIQVPSKGGHPKTIIFLTYDAFGVLPPVSKLSIEQAMYHFLSGYTAKVAGTERGIKEPTATFSACFGAAFMTLHPTKYAKLLGEKMKKHNVRAYLMNTGLVGGSYGVGKRMNLPSTRKIIDEILNGNIEKSEFVTHPVFQVAYPKTISGVDSAILDPREAWTDKAAYDQTAKKLGEMFIKNFKQYAEGSKDFDFTAFGPKI.

Residues arginine 57, tyrosine 193, and lysine 199 each coordinate substrate. ATP is bound by residues lysine 199, histidine 218, and 234-242 (GLSGTGKTT). Lysine 199 and histidine 218 together coordinate Mn(2+). Aspartate 255 contributes to the Mn(2+) binding site. 3 residues coordinate ATP: glutamate 283, arginine 320, and threonine 445. Arginine 320 contacts substrate.

This sequence belongs to the phosphoenolpyruvate carboxykinase (ATP) family. The cofactor is Mn(2+).

The protein localises to the cytoplasm. It carries out the reaction oxaloacetate + ATP = phosphoenolpyruvate + ADP + CO2. Its pathway is carbohydrate biosynthesis; gluconeogenesis. Involved in the gluconeogenesis. Catalyzes the conversion of oxaloacetate (OAA) to phosphoenolpyruvate (PEP) through direct phosphoryl transfer between the nucleoside triphosphate and OAA. In Leptospira interrogans serogroup Icterohaemorrhagiae serovar copenhageni (strain Fiocruz L1-130), this protein is Phosphoenolpyruvate carboxykinase (ATP).